The following is a 526-amino-acid chain: METDAIDGYITCDNELSPEGEHANMAIDLTSSTPNGQHASPSHMTSTNSVKLEMQSDEECDRQPLSREDEIRGHDEGSSLEEPLIESSEVADNRKVQDLQGEGGIRLPNGKLKCDVCGMVCIGPNVLMVHKRSHTGERPFHCNQCGASFTQKGNLLRHIKLHSGEKPFKCPFCSYACRRRDALTGHLRTHSVGKPHKCNYCGRSYKQRSSLEEHKERCHNYLQNVSMEAAGQVMSHHVPPMEDCKEQEPIMDNNISLVPFERPAVIEKLTANMGKRKSSTPQKFVGEKLMRFSYPDIHFDMNLTYEKEAELMQSHMMDQAINNAITYLGAEALHPLMQHAPSTIAEVAPVISSAYSQVYHPNRIERPISRETSDSHENNMDGPISLIRPKSRPQEREASPSNSCLDSTDSESSHDDRQSYQGNPALNPKRKQSPAYMKEDVKALDATKAPKGSLKDIYKVFNGEGEQIRAFKCEHCRVLFLDHVMYTIHMGCHGYRDPLECNICGYRSQDRYEFSSHIVRGEHTFH.

Residues 28 to 94 (DLTSSTPNGQ…IESSEVADNR (67 aa)) are disordered. Polar residues predominate over residues 29 to 50 (LTSSTPNGQHASPSHMTSTNSV). Position 56 is a phosphoserine (Ser56). Residues 61–77 (DRQPLSREDEIRGHDEG) are compositionally biased toward basic and acidic residues. Residues Ser78 and Ser79 each carry the phosphoserine modification. Residue Lys95 forms a Glycyl lysine isopeptide (Lys-Gly) (interchain with G-Cter in SUMO2) linkage. 4 C2H2-type zinc fingers span residues 112-134 (LKCD…KRSH), 140-162 (FHCN…IKLH), 168-190 (FKCP…LRTH), and 196-219 (HKCN…ERCH). Lys288 carries the post-translational modification N6-acetyllysine. Basic and acidic residues predominate over residues 368-379 (ISRETSDSHENN). Residues 368–435 (ISRETSDSHE…LNPKRKQSPA (68 aa)) are disordered. Residues Lys442 and Lys448 each participate in a glycyl lysine isopeptide (Lys-Gly) (interchain with G-Cter in SUMO2) cross-link. 2 consecutive C2H2-type zinc fingers follow at residues 471-493 (FKCE…MGCH) and 499-523 (LECN…RGEH).

It belongs to the Ikaros C2H2-type zinc-finger protein family. Can form homodimers. Interacts with IKZF4 and IKZF5. Expressed in outer hair cells (OHC) of the organ of Corti. Abundant in thymus, low expression in bone marrow and brain and no detectable expression in spleen, liver, kidney or muscle. Expressed in T-cells.

It is found in the nucleus. Functionally, transcriptional regulator required for outer hair cells (OHC) maturation and, consequently, for hearing. This Mus musculus (Mouse) protein is Zinc finger protein Helios (Ikzf2).